Consider the following 302-residue polypeptide: Aspartate carbamoyltransferase catalytic subunit (302 aa).

Carbamoyl phosphate-binding residues include Arg55 and Thr56. Lys83 serves as a coordination point for L-aspartate. Carbamoyl phosphate contacts are provided by Arg105, His133, and Gln136. L-aspartate-binding residues include Arg166 and Arg222. Positions 262 and 263 each coordinate carbamoyl phosphate.

Belongs to the aspartate/ornithine carbamoyltransferase superfamily. ATCase family. Heterododecamer (2C3:3R2) of six catalytic PyrB chains organized as two trimers (C3), and six regulatory PyrI chains organized as three dimers (R2).

The catalysed reaction is carbamoyl phosphate + L-aspartate = N-carbamoyl-L-aspartate + phosphate + H(+). It participates in pyrimidine metabolism; UMP biosynthesis via de novo pathway; (S)-dihydroorotate from bicarbonate: step 2/3. In terms of biological role, catalyzes the condensation of carbamoyl phosphate and aspartate to form carbamoyl aspartate and inorganic phosphate, the committed step in the de novo pyrimidine nucleotide biosynthesis pathway. The protein is Aspartate carbamoyltransferase catalytic subunit of Solibacter usitatus (strain Ellin6076).